The following is a 3462-amino-acid chain: DNA-directed RNA polymerase subunit beta'' (3462 aa).

Zn(2+)-binding residues include C263, C335, C342, and C345. The insert-1 stretch occupies residues 541-1085; that stretch reads KIDDQELSSV…PNKIFSSNLF (545 aa). Residues 1528–1585 are insert-2; it reads PQSANERKQILKKARQKLRLFPLNLNEKKNRFSSVTLDLLRDQTTLHKMQSCGEAESG. The segment at 1602–1699 is insert-3; it reads KKITEIFTFC…FSKQMGNRLL (98 aa). The insert-4 stretch occupies residues 1938 to 2168; that stretch reads LKNKMNQSFS…SQASWILETN (231 aa). An insert-5 region spans residues 2320 to 2870; sequence NLVSGKLNFL…KKKIAKEGAF (551 aa). Residues 2972-3196 are insert-6; that stretch reads SKSQRGWFHN…IGQLLRYGKE (225 aa).

The protein belongs to the RNA polymerase beta' chain family. RpoC2 subfamily. As to quaternary structure, in plastids the minimal PEP RNA polymerase catalytic core is composed of four subunits: alpha, beta, beta', and beta''. When a (nuclear-encoded) sigma factor is associated with the core the holoenzyme is formed, which can initiate transcription. It depends on Zn(2+) as a cofactor.

It is found in the plastid. Its subcellular location is the chloroplast. It catalyses the reaction RNA(n) + a ribonucleoside 5'-triphosphate = RNA(n+1) + diphosphate. DNA-dependent RNA polymerase catalyzes the transcription of DNA into RNA using the four ribonucleoside triphosphates as substrates. This is DNA-directed RNA polymerase subunit beta'' from Tupiella akineta (Green alga).